Consider the following 310-residue polypeptide: MIIVTGGAGFIGSNIVKSLNDIGYRDILVVDNLKDGTKFVNLVDLDIADYVDKEDFVASIVAGDDLGDIEAVFHEGACSSTTEWDGKYMMDNNYQYSKDVLHYCLDRSIPFLYASSAATYGGRNDNFIEDRQYEQPLNVYGYSKFLFDQYVREILPEAESQICGFRYFNVYGPREGHKGSMASVAFHLNNQINQGENPKLFSGSENFKRDFIYVGDVAAVNLWFWQNGVSGIFNCGTGRAESFQAVADATLAFHNKGGVEYIEFPEKLKGRYQAYTQADLTNLRAAGYDKPFKTVAEGVAEYMTWLNRTV.

NADP(+) contacts are provided by residues phenylalanine 10–isoleucine 11, aspartate 31–asparagine 32, lysine 38, lysine 53, glutamate 75–serine 79, and asparagine 92. Tyrosine 140 acts as the Proton acceptor in catalysis. Lysine 144 lines the NADP(+) pocket. Asparagine 169 serves as a coordination point for substrate. NADP(+)-binding residues include valine 170 and lysine 178. Lysine 178 acts as the Proton acceptor in catalysis. Residues serine 180, histidine 187, phenylalanine 201–serine 204, arginine 209, and tyrosine 272 contribute to the substrate site.

It belongs to the NAD(P)-dependent epimerase/dehydratase family. HldD subfamily. In terms of assembly, homopentamer. It depends on NADP(+) as a cofactor.

The catalysed reaction is ADP-D-glycero-beta-D-manno-heptose = ADP-L-glycero-beta-D-manno-heptose. It participates in nucleotide-sugar biosynthesis; ADP-L-glycero-beta-D-manno-heptose biosynthesis; ADP-L-glycero-beta-D-manno-heptose from D-glycero-beta-D-manno-heptose 7-phosphate: step 4/4. In terms of biological role, catalyzes the interconversion between ADP-D-glycero-beta-D-manno-heptose and ADP-L-glycero-beta-D-manno-heptose via an epimerization at carbon 6 of the heptose. This chain is ADP-L-glycero-D-manno-heptose-6-epimerase, found in Pectobacterium atrosepticum (strain SCRI 1043 / ATCC BAA-672) (Erwinia carotovora subsp. atroseptica).